Consider the following 136-residue polypeptide: Glutaredoxin-C7 (136 aa).

Residues 29 to 135 (LLRIESLASE…PLLKDAGALW (107 aa)) enclose the Glutaredoxin domain. Cysteine 49 and cysteine 52 form a disulfide bridge. The Responsive for interaction with TGA factors motif lies at 133-136 (ALWL).

Belongs to the glutaredoxin family. CC-type subfamily. Interacts with TGA2, TGA3, TGA7 and PAN. Interacts with TGA9 and TGA10 in the nucleus. In terms of tissue distribution, highly expressed in inflorescences, roots, and siliques. Expressed at lower levels in mature flowers.

The protein resides in the cytoplasm. The protein localises to the nucleus. Functionally, has a glutathione-disulfide oxidoreductase activity in the presence of NADPH and glutathione reductase. Reduces low molecular weight disulfides and proteins. Involved in flower development as a regulator of petal primorida initiation and further petal morphogenesis. May mediate post-translational modifications of target proteins required for normal petal organ initiation and morphogenesis. ROXY1/TGA protein interactions can occur in vivo and support their biological relevance in petal development. May be involved in the regulation of the floral regulator class C gene AG (AGAMOUS). The chain is Glutaredoxin-C7 (GRXC7) from Arabidopsis thaliana (Mouse-ear cress).